We begin with the raw amino-acid sequence, 355 residues long: Protein RecA (355 aa).

Residue Gly67–Thr74 coordinates ATP. Residues Asn335–Phe355 form a disordered region. Acidic residues predominate over residues Val341 to Phe355.

The protein belongs to the RecA family.

The protein localises to the cytoplasm. Can catalyze the hydrolysis of ATP in the presence of single-stranded DNA, the ATP-dependent uptake of single-stranded DNA by duplex DNA, and the ATP-dependent hybridization of homologous single-stranded DNAs. It interacts with LexA causing its activation and leading to its autocatalytic cleavage. This is Protein RecA from Sodalis glossinidius.